The following is a 116-amino-acid chain: UPF0122 protein CA_C1753 (116 aa).

The protein belongs to the UPF0122 family.

Its function is as follows. Might take part in the signal recognition particle (SRP) pathway. This is inferred from the conservation of its genetic proximity to ftsY/ffh. May be a regulatory protein. In Clostridium acetobutylicum (strain ATCC 824 / DSM 792 / JCM 1419 / IAM 19013 / LMG 5710 / NBRC 13948 / NRRL B-527 / VKM B-1787 / 2291 / W), this protein is UPF0122 protein CA_C1753.